We begin with the raw amino-acid sequence, 417 residues long: Tyrosine--tRNA ligase (417 aa).

An L-tyrosine-binding site is contributed by Y39. Residues 44–53 carry the 'HIGH' region motif; it reads PTASSLHVGH. Y176 and Q180 together coordinate L-tyrosine. A 'KMSKS' region motif is present at residues 236 to 240; that stretch reads KMGKS. K239 is an ATP binding site. The 67-residue stretch at 350 to 416 folds into the S4 RNA-binding domain; that stretch reads VGVLSLIVRA…GKKKHVLVRP (67 aa).

The protein belongs to the class-I aminoacyl-tRNA synthetase family. TyrS type 1 subfamily. Homodimer.

The protein localises to the cytoplasm. The enzyme catalyses tRNA(Tyr) + L-tyrosine + ATP = L-tyrosyl-tRNA(Tyr) + AMP + diphosphate + H(+). In terms of biological role, catalyzes the attachment of tyrosine to tRNA(Tyr) in a two-step reaction: tyrosine is first activated by ATP to form Tyr-AMP and then transferred to the acceptor end of tRNA(Tyr). This Agrobacterium fabrum (strain C58 / ATCC 33970) (Agrobacterium tumefaciens (strain C58)) protein is Tyrosine--tRNA ligase.